The sequence spans 373 residues: Alanine racemase (373 aa).

Lysine 40 serves as the catalytic Proton acceptor; specific for D-alanine. Lysine 40 bears the N6-(pyridoxal phosphate)lysine mark. Residue arginine 140 coordinates substrate. Tyrosine 268 (proton acceptor; specific for L-alanine) is an active-site residue. Residue methionine 315 coordinates substrate.

The protein belongs to the alanine racemase family. Pyridoxal 5'-phosphate is required as a cofactor.

It catalyses the reaction L-alanine = D-alanine. It functions in the pathway amino-acid biosynthesis; D-alanine biosynthesis; D-alanine from L-alanine: step 1/1. Its function is as follows. Catalyzes the interconversion of L-alanine and D-alanine. May also act on other amino acids. The polypeptide is Alanine racemase (alr) (Limosilactobacillus fermentum (strain NBRC 3956 / LMG 18251) (Lactobacillus fermentum)).